The chain runs to 547 residues: Phosphomethylpyrimidine synthase (547 aa).

Substrate-binding positions include N146, M175, Y204, H240, 260 to 262 (SRG), 301 to 304 (DGLR), and E340. H344 contributes to the Zn(2+) binding site. Y367 contributes to the substrate binding site. A Zn(2+)-binding site is contributed by H408. The [4Fe-4S] cluster site is built by C488, C491, and C496.

The protein belongs to the ThiC family. Requires [4Fe-4S] cluster as cofactor.

It carries out the reaction 5-amino-1-(5-phospho-beta-D-ribosyl)imidazole + S-adenosyl-L-methionine = 4-amino-2-methyl-5-(phosphooxymethyl)pyrimidine + CO + 5'-deoxyadenosine + formate + L-methionine + 3 H(+). It participates in cofactor biosynthesis; thiamine diphosphate biosynthesis. In terms of biological role, catalyzes the synthesis of the hydroxymethylpyrimidine phosphate (HMP-P) moiety of thiamine from aminoimidazole ribotide (AIR) in a radical S-adenosyl-L-methionine (SAM)-dependent reaction. This Mycobacterium bovis (strain ATCC BAA-935 / AF2122/97) protein is Phosphomethylpyrimidine synthase.